Consider the following 143-residue polypeptide: Large ribosomal subunit protein uL15 (143 aa).

A disordered region spans residues 1 to 58 (MQLNDLRSAPGARREKHRPGRGIGSGLGKTGGRGHKGQTSRSGGSIAPGFEGGQQPLH). The span at 21–31 (RGIGSGLGKTG) shows a compositional bias: gly residues.

The protein belongs to the universal ribosomal protein uL15 family. In terms of assembly, part of the 50S ribosomal subunit.

Functionally, binds to the 23S rRNA. The chain is Large ribosomal subunit protein uL15 from Ectopseudomonas mendocina (strain ymp) (Pseudomonas mendocina).